A 329-amino-acid polypeptide reads, in one-letter code: 4-hydroxythreonine-4-phosphate dehydrogenase (329 aa).

Substrate-binding residues include H136 and T137. Residues H166, H211, and H266 each contribute to the a divalent metal cation site. The substrate site is built by K274, N283, and R292.

The protein belongs to the PdxA family. As to quaternary structure, homodimer. It depends on Zn(2+) as a cofactor. Mg(2+) serves as cofactor. Co(2+) is required as a cofactor.

Its subcellular location is the cytoplasm. The catalysed reaction is 4-(phosphooxy)-L-threonine + NAD(+) = 3-amino-2-oxopropyl phosphate + CO2 + NADH. It participates in cofactor biosynthesis; pyridoxine 5'-phosphate biosynthesis; pyridoxine 5'-phosphate from D-erythrose 4-phosphate: step 4/5. Catalyzes the NAD(P)-dependent oxidation of 4-(phosphooxy)-L-threonine (HTP) into 2-amino-3-oxo-4-(phosphooxy)butyric acid which spontaneously decarboxylates to form 3-amino-2-oxopropyl phosphate (AHAP). The chain is 4-hydroxythreonine-4-phosphate dehydrogenase from Escherichia coli (strain SE11).